Here is a 153-residue protein sequence, read N- to C-terminus: D-aminoacyl-tRNA deacylase (153 aa).

The Gly-cisPro motif, important for rejection of L-amino acids signature appears at 137–138 (GP).

Belongs to the DTD family. As to quaternary structure, homodimer.

The protein localises to the cytoplasm. It catalyses the reaction glycyl-tRNA(Ala) + H2O = tRNA(Ala) + glycine + H(+). It carries out the reaction a D-aminoacyl-tRNA + H2O = a tRNA + a D-alpha-amino acid + H(+). Its function is as follows. An aminoacyl-tRNA editing enzyme that deacylates mischarged D-aminoacyl-tRNAs. Also deacylates mischarged glycyl-tRNA(Ala), protecting cells against glycine mischarging by AlaRS. Acts via tRNA-based rather than protein-based catalysis; rejects L-amino acids rather than detecting D-amino acids in the active site. By recycling D-aminoacyl-tRNA to D-amino acids and free tRNA molecules, this enzyme counteracts the toxicity associated with the formation of D-aminoacyl-tRNA entities in vivo and helps enforce protein L-homochirality. The chain is D-aminoacyl-tRNA deacylase from Herpetosiphon aurantiacus (strain ATCC 23779 / DSM 785 / 114-95).